The following is a 124-amino-acid chain: Large ribosomal subunit protein bL12 (124 aa).

This sequence belongs to the bacterial ribosomal protein bL12 family. As to quaternary structure, homodimer. Part of the ribosomal stalk of the 50S ribosomal subunit. Forms a multimeric L10(L12)X complex, where L10 forms an elongated spine to which 2 to 4 L12 dimers bind in a sequential fashion. Binds GTP-bound translation factors.

Its function is as follows. Forms part of the ribosomal stalk which helps the ribosome interact with GTP-bound translation factors. Is thus essential for accurate translation. The protein is Large ribosomal subunit protein bL12 of Borreliella burgdorferi (strain ZS7) (Borrelia burgdorferi).